Reading from the N-terminus, the 107-residue chain is Integration host factor subunit beta (107 aa).

Positions 78–107 (PHFKPGKELRERVDGRAGEPLKADEPDDER) are disordered. Basic and acidic residues predominate over residues 82–101 (PGKELRERVDGRAGEPLKAD).

It belongs to the bacterial histone-like protein family. As to quaternary structure, heterodimer of an alpha and a beta chain.

Its function is as follows. This protein is one of the two subunits of integration host factor, a specific DNA-binding protein that functions in genetic recombination as well as in transcriptional and translational control. This chain is Integration host factor subunit beta, found in Burkholderia multivorans (strain ATCC 17616 / 249).